A 154-amino-acid polypeptide reads, in one-letter code: Endoribonuclease YbeY (154 aa).

The Zn(2+) site is built by H113, H117, and H123.

Belongs to the endoribonuclease YbeY family. The cofactor is Zn(2+).

It is found in the cytoplasm. Functionally, single strand-specific metallo-endoribonuclease involved in late-stage 70S ribosome quality control and in maturation of the 3' terminus of the 16S rRNA. The sequence is that of Endoribonuclease YbeY from Vibrio vulnificus (strain CMCP6).